A 248-amino-acid chain; its full sequence is Transcription factor cicD (248 aa).

The span at M1 to V22 shows a compositional bias: basic and acidic residues. The tract at residues M1 to G25 is disordered. The HTH myb-type domain maps to D19–G74. The segment at residues W46 to S70 is a DNA-binding region (H-T-H motif). Positions S186–D208 are disordered.

It is found in the nucleus. Functionally, transcription factor that regulates the expression of the gene cluster that mediates the biosynthesis of cichorine, a phytotoxin active against knapweed, corn, and soybeans. The chain is Transcription factor cicD from Emericella nidulans (strain FGSC A4 / ATCC 38163 / CBS 112.46 / NRRL 194 / M139) (Aspergillus nidulans).